The sequence spans 397 residues: Succinyl-diaminopimelate desuccinylase (397 aa).

Histidine 74 is a binding site for Zn(2+). Aspartate 76 is a catalytic residue. Aspartate 107 serves as a coordination point for Zn(2+). Glutamate 141 serves as the catalytic Proton acceptor. Zn(2+) contacts are provided by glutamate 142, glutamate 170, and histidine 368.

The protein belongs to the peptidase M20A family. DapE subfamily. In terms of assembly, homodimer. It depends on Zn(2+) as a cofactor. Co(2+) serves as cofactor.

The enzyme catalyses N-succinyl-(2S,6S)-2,6-diaminopimelate + H2O = (2S,6S)-2,6-diaminopimelate + succinate. The protein operates within amino-acid biosynthesis; L-lysine biosynthesis via DAP pathway; LL-2,6-diaminopimelate from (S)-tetrahydrodipicolinate (succinylase route): step 3/3. In terms of biological role, catalyzes the hydrolysis of N-succinyl-L,L-diaminopimelic acid (SDAP), forming succinate and LL-2,6-diaminopimelate (DAP), an intermediate involved in the bacterial biosynthesis of lysine and meso-diaminopimelic acid, an essential component of bacterial cell walls. In Mesorhizobium japonicum (strain LMG 29417 / CECT 9101 / MAFF 303099) (Mesorhizobium loti (strain MAFF 303099)), this protein is Succinyl-diaminopimelate desuccinylase.